The sequence spans 801 residues: Fibroblast growth factor receptor 3 (801 aa).

Residues 1–20 (MVVPACVLVFCVAVVAGATS) form the signal peptide. Residues 21 to 369 (EPPGPEQRVV…TDEAGSVYAG (349 aa)) lie on the Extracellular side of the membrane. The 103-residue stretch at 22–124 (PPGPEQRVVR…VLCHFSVRVT (103 aa)) folds into the Ig-like C2-type 1 domain. C59 and C107 form a disulfide bridge. N-linked (GlcNAc...) asparagine glycosylation occurs at N96. The interval 125 to 146 (DAPSSGDDEDGEDVAEDTGAPY) is disordered. The span at 130-140 (GDDEDGEDVAE) shows a compositional bias: acidic residues. Ig-like C2-type domains follow at residues 145-238 (PYWT…YTLD) and 247-349 (PILQ…AWLV). A disulfide bond links C170 and C222. 5 N-linked (GlcNAc...) asparagine glycosylation sites follow: N219, N256, N288, N309, and N322. A disulfide bridge connects residues C269 and C333. The chain crosses the membrane as a helical span at residues 370–390 (VLSYGVVFFLFILVVAAVILC). Over 391 to 801 (RLRSPPKKGL…GPPSNGGPRT (411 aa)) the chain is Cytoplasmic. 2 positions are modified to phosphoserine: S438 and S439. The 291-residue stretch at 466 to 756 (LTLGKPLGEG…LTVTSTDEYL (291 aa)) folds into the Protein kinase domain. ATP-binding positions include 472–480 (LGEGCFGQV) and K502. Residue D611 is the Proton acceptor of the active site. Residues Y641, Y642, Y719, and Y755 each carry the phosphotyrosine; by autocatalysis modification. The interval 762–801 (FEQYSPGGQDTPSSSSSGDDSVFTHDLLPPGPPSNGGPRT) is disordered. Low complexity predominate over residues 766 to 782 (SPGGQDTPSSSSSGDDS). Residues 790–801 (PPGPPSNGGPRT) are compositionally biased toward pro residues.

Belongs to the protein kinase superfamily. Tyr protein kinase family. Fibroblast growth factor receptor subfamily. In terms of assembly, monomer. Homodimer after ligand binding. Interacts with FGF1, FGF2, FGF4, FGF6; FGF8, FGF9, FGF10, FGF17, FGF18, FGF19, FGF20 and FGF23 (in vitro). Interacts with KLB. Affinity for fibroblast growth factors (FGFs) is increased by heparan sulfate glycosaminoglycans that function as coreceptors. Likewise, KLB increases the affinity for FGF19 and FGF21. Interacts with PIK3R1, PLCG1, SOCS1 and SOCS3. Autophosphorylated. Binding of FGF family members together with heparan sulfate proteoglycan or heparin promotes receptor dimerization and autophosphorylation on tyrosine residues. Autophosphorylation occurs in trans between the two FGFR molecules present in the dimer. Phosphorylation at Tyr-719 is essential for stimulation of cell proliferation and activation of PIK3R1, STAT1 and MAP kinase signaling. Phosphorylation at Tyr-755 is required for interaction with PIK3R1 and PLCG1. In terms of processing, ubiquitinated. Is rapidly ubiquitinated after ligand binding and autophosphorylation, leading to receptor internalization and degradation. Subject to both proteasomal and lysosomal degradation. Post-translationally, N-glycosylated in the endoplasmic reticulum. The N-glycan chains undergo further maturation to an Endo H-resistant form in the Golgi apparatus. As to expression, in embryo, expressed in heart, lung, kidney, skin, head and liver but not in muscle. In adult, highest levels in brain. Also expressed in liver, lung, kidney, testis, ovary and uterus. Very low levels in heart, thymus, spleen and muscle.

The protein localises to the cell membrane. It localises to the cytoplasmic vesicle. It is found in the endoplasmic reticulum. It carries out the reaction L-tyrosyl-[protein] + ATP = O-phospho-L-tyrosyl-[protein] + ADP + H(+). With respect to regulation, present in an inactive conformation in the absence of bound ligand. Ligand binding leads to dimerization and activation by autophosphorylation on tyrosine residues. Functionally, tyrosine-protein kinase that acts as a cell-surface receptor for fibroblast growth factors and plays an essential role in the regulation of cell proliferation, differentiation and apoptosis. Plays an essential role in the regulation of chondrocyte differentiation, proliferation and apoptosis, and is required for normal skeleton development. Regulates both osteogenesis and postnatal bone mineralization by osteoblasts. Promotes apoptosis in chondrocytes, but can also promote cancer cell proliferation. Required for normal development of the inner ear. Phosphorylates PLCG1, CBL and FRS2. Ligand binding leads to the activation of several signaling cascades. Activation of PLCG1 leads to the production of the cellular signaling molecules diacylglycerol and inositol 1,4,5-trisphosphate. Phosphorylation of FRS2 triggers recruitment of GRB2, GAB1, PIK3R1 and SOS1, and mediates activation of RAS, MAPK1/ERK2, MAPK3/ERK1 and the MAP kinase signaling pathway, as well as of the AKT1 signaling pathway. Plays a role in the regulation of vitamin D metabolism. Mutations that lead to constitutive kinase activation or impair normal FGFR3 maturation, internalization and degradation lead to aberrant signaling. Over-expressed or constitutively activated FGFR3 promotes activation of STAT1, STAT5A and STAT5B. Plays a role in postnatal lung development. In Mus musculus (Mouse), this protein is Fibroblast growth factor receptor 3 (Fgfr3).